A 248-amino-acid polypeptide reads, in one-letter code: Putative TrmH family tRNA/rRNA methyltransferase (248 aa).

The S-adenosyl-L-methionine site is built by G196, I216, and L225.

It belongs to the class IV-like SAM-binding methyltransferase superfamily. RNA methyltransferase TrmH family.

In Staphylococcus aureus (strain Mu50 / ATCC 700699), this protein is Putative TrmH family tRNA/rRNA methyltransferase.